Consider the following 63-residue polypeptide: Large ribosomal subunit protein uL29 (63 aa).

Belongs to the universal ribosomal protein uL29 family.

This chain is Large ribosomal subunit protein uL29, found in Enterobacter sp. (strain 638).